A 95-amino-acid polypeptide reads, in one-letter code: Aspartyl/glutamyl-tRNA(Asn/Gln) amidotransferase subunit C (95 aa).

The protein belongs to the GatC family. In terms of assembly, heterotrimer of A, B and C subunits.

It catalyses the reaction L-glutamyl-tRNA(Gln) + L-glutamine + ATP + H2O = L-glutaminyl-tRNA(Gln) + L-glutamate + ADP + phosphate + H(+). The enzyme catalyses L-aspartyl-tRNA(Asn) + L-glutamine + ATP + H2O = L-asparaginyl-tRNA(Asn) + L-glutamate + ADP + phosphate + 2 H(+). In terms of biological role, allows the formation of correctly charged Asn-tRNA(Asn) or Gln-tRNA(Gln) through the transamidation of misacylated Asp-tRNA(Asn) or Glu-tRNA(Gln) in organisms which lack either or both of asparaginyl-tRNA or glutaminyl-tRNA synthetases. The reaction takes place in the presence of glutamine and ATP through an activated phospho-Asp-tRNA(Asn) or phospho-Glu-tRNA(Gln). This chain is Aspartyl/glutamyl-tRNA(Asn/Gln) amidotransferase subunit C, found in Bradyrhizobium sp. (strain ORS 278).